A 438-amino-acid chain; its full sequence is Putative F-box protein At5g15660 (438 aa).

The segment at 1–24 (MRRRSKKIKTENNSNPETSEERNK) is disordered. One can recognise an F-box domain in the interval 22 to 68 (RNKFDEIPHDLVIEILERLPLKSVARFLTVSKLWATTIRSPDFRKSY).

The polypeptide is Putative F-box protein At5g15660 (Arabidopsis thaliana (Mouse-ear cress)).